Here is a 371-residue protein sequence, read N- to C-terminus: Mannose-1-phosphate guanylyltransferase catalytic subunit beta (371 aa).

The segment at 14 to 233 is substrate-binding domain; that stretch reads RALILVGGYG…TGFWMDIGQP (220 aa). A GDP-alpha-D-mannose-binding site is contributed by Asp-122. Asp-122 lines the Mg(2+) pocket. Lys-173 is a catalytic residue. Asp-229 contributes to the GDP-alpha-D-mannose binding site. Asp-229 is a Mg(2+) binding site. The interval 256 to 371 is hexapeptide repeat domain; that stretch reads YTGPGVVGNV…ASVPEPQIIM (116 aa).

It belongs to the transferase hexapeptide repeat family. As to quaternary structure, component of the GMPPA-GMPPB mannose-1-phosphate guanylyltransferase complex composed of 4 Gmppa subunits and 8 Gmppb subunits; the complex is organized into three layers, a central layer made up of 2 Gmppa dimers sandwiched between two layers each made up of 2 Gmppb dimers. Gmppb catalytic activity is reduced when part of the complex and binding of GDP-alpha-D-Mannose by Gmppa induces allosteric feedback inhibition of Gmppb. Requires Mg(2+) as cofactor.

It carries out the reaction alpha-D-mannose 1-phosphate + GTP + H(+) = GDP-alpha-D-mannose + diphosphate. It functions in the pathway nucleotide-sugar biosynthesis; GDP-alpha-D-mannose biosynthesis; GDP-alpha-D-mannose from alpha-D-mannose 1-phosphate (GTP route): step 1/1. Its activity is regulated as follows. Enzyme activity is reduced by incorporation into the GMPPA-GMPPB mannose-1-phosphate guanylyltransferase complex. Allosterically inhibited, when part of the GMPPA-GMPPB complex, by GDP-alpha-D-mannose binding to Gmppa. In terms of biological role, catalytic subunit of the GMPPA-GMPPB mannose-1-phosphate guanylyltransferase complex. Catalyzes the formation of GDP-mannose, an essential precursor of glycan moieties of glycoproteins and glycolipids. Can catalyze the reverse reaction in vitro. Together with GMPPA regulates GDP-alpha-D-mannose levels. In Drosophila pseudoobscura pseudoobscura (Fruit fly), this protein is Mannose-1-phosphate guanylyltransferase catalytic subunit beta.